The chain runs to 923 residues: Protein dct-6 (923 aa).

Positions 312 to 347 (DMNDQIEQMISLLVDELSELEKLEQLCKEVERTGNQ) form a coiled coil.

In terms of biological role, may have a role in tumor suppression. The chain is Protein dct-6 (dct-6) from Caenorhabditis elegans.